Reading from the N-terminus, the 61-residue chain is Ferredoxin-2 (61 aa).

2 4Fe-4S ferredoxin-type domains span residues 2 to 27 and 28 to 61; these read HRIT…SAGD and EIYI…IIKV. Residues Cys-8, Cys-11, Cys-14, Cys-18, Cys-37, Cys-40, Cys-49, and Cys-53 each contribute to the [4Fe-4S] cluster site.

It depends on [4Fe-4S] cluster as a cofactor.

Functionally, ferredoxins are iron-sulfur proteins that transfer electrons in a wide variety of metabolic reactions. The sequence is that of Ferredoxin-2 from Chlorobium limicola.